The sequence spans 183 residues: NADH-quinone oxidoreductase subunit A (183 aa).

The next 3 helical transmembrane spans lie at 11-31 (IIAF…VPLL), 63-83 (FYLV…LYAW), and 98-118 (VVIF…VGAL). Positions 159–183 (TGQIPAQSSGRVKSKTTPALSSEKE) are disordered.

It belongs to the complex I subunit 3 family. In terms of assembly, NDH-1 is composed of 14 different subunits. Subunits NuoA, H, J, K, L, M, N constitute the membrane sector of the complex.

The protein localises to the cell inner membrane. The enzyme catalyses a quinone + NADH + 5 H(+)(in) = a quinol + NAD(+) + 4 H(+)(out). NDH-1 shuttles electrons from NADH, via FMN and iron-sulfur (Fe-S) centers, to quinones in the respiratory chain. The immediate electron acceptor for the enzyme in this species is believed to be ubiquinone. Couples the redox reaction to proton translocation (for every two electrons transferred, four hydrogen ions are translocated across the cytoplasmic membrane), and thus conserves the redox energy in a proton gradient. This chain is NADH-quinone oxidoreductase subunit A, found in Acinetobacter baumannii (strain ACICU).